The primary structure comprises 84 residues: Large ribosomal subunit protein bL27 (84 aa).

The span at 1–11 shows a compositional bias: polar residues; the sequence is MATTKAGGSTK. The disordered stretch occupies residues 1 to 20; that stretch reads MATTKAGGSTKNGRDSHSKR.

It belongs to the bacterial ribosomal protein bL27 family.

This is Large ribosomal subunit protein bL27 from Mycoplasmopsis synoviae (strain 53) (Mycoplasma synoviae).